Consider the following 308-residue polypeptide: Uricase (308 aa).

Residues K5 and T65 each act as charge relay system in the active site. 7 residues coordinate urate: T65, D66, F177, R194, I242, Q243, and N269. The interval 283–308 (ASVLREPPAPTGFQQFSMDRGDLDEQ) is disordered.

This sequence belongs to the uricase family.

It carries out the reaction urate + O2 + H2O = 5-hydroxyisourate + H2O2. Its pathway is purine metabolism; urate degradation; (S)-allantoin from urate: step 1/3. Functionally, catalyzes the oxidation of uric acid to 5-hydroxyisourate, which is further processed to form (S)-allantoin. The polypeptide is Uricase (Haloferax volcanii (strain ATCC 29605 / DSM 3757 / JCM 8879 / NBRC 14742 / NCIMB 2012 / VKM B-1768 / DS2) (Halobacterium volcanii)).